A 787-amino-acid polypeptide reads, in one-letter code: Transcriptional corepressor LEUNIG_HOMOLOG (787 aa).

A required for SEU-binding region spans residues 1–88; the sequence is MAQSNWEADK…IEAQQGKAKE (88 aa). One can recognise a LisH domain in the interval 8–40; the sequence is ADKMLDVYIYDYLVKKKLHNTAKSFMTEGKVSP. Residues 77–106 are a coiled coil; sequence AYIEAQQGKAKEQQMQIQQLQMMRQAQMQR. Residues 299-413 are disordered; it reads NMTNSPMYGG…TPSTHTPVDG (115 aa). Composition is skewed to low complexity over residues 336 to 346 and 355 to 372; these read SIGSPMQSSSS and QQSSSQQQDHLLSQQSQQ. Positions 380–409 are enriched in polar residues; it reads PSSSGPANSTGTGNTVGPSNSQPSTPSTHT. WD repeat units follow at residues 508-547, 550-589, 593-633, 635-671, 675-715, 717-755, and 757-787; these read KSASKVICCSFSYDGKLLASAGHDKKVFIWNMETLQVEST, EHAHIITDVRFRPNSTQLATSSFDKTIKIWDASDPGYFLR, GHAA…VRAV, GASTQVRFQPRTGQFLAAASENTVSIFDIENNNKRVN, GHSS…HELS, SGNKFHSVVFHPSYPDLLVIGGYQAIELWNTMENKCMTV, and GHECVISALAQSPSTGVVASASHDKSVKIWK.

Forms corepressor complexes with SLK1 and SLK2; LUH is the transcription repressor subunit and SLK1 and SLK2 the specific DNA-binding adapters. Interacts with SEU. Binds to YAB3, YAB5 and YAB1/FIL; these complexes promote adaxial cell identity in leaves as well as embryonic shoot apical meristem (SAM) initiation and postembryonic SAM maintenance. As to expression, expressed in roots, stems, leaves, seedlings, apex, flowers, siliques, flower organs and seeds (including seed coat).

It is found in the nucleus. Functionally, transcription repressor subunit of the SEU-SLK1 and SEU-SLK2 transcriptional corepressor of abiotic stress (e.g. salt and osmotic stress) response genes, by means of an epigenetic process involving histone modification (e.g. H3K9 and H3K14 acetylation), probably by recruiting HDAC, to facilitate the condensation of chromatin thus preventing transcription at the target genes. Can also act as a transcription activator. Implicated in embryo and floral development. Involved in post-synthesis cell wall modifications necessary for mucilage extrusion from seeds upon imbibition, probably by promoting the expression of genes required for mucilage maturation (e.g. MUM2). Regulates the maintenance on leaf polarity and meristem activity as well as the initiation of embryonic shoot apical meristem (SAM) development. In Arabidopsis thaliana (Mouse-ear cress), this protein is Transcriptional corepressor LEUNIG_HOMOLOG.